Here is a 234-residue protein sequence, read N- to C-terminus: Filarial antigen Av33 (234 aa).

The first 17 residues, 1–17 (MKILSCLLLCTITVLEG), serve as a signal peptide directing secretion. The cysteines at positions 135 and 230 are disulfide-linked. The disordered stretch occupies residues 204 to 234 (TSQASEATTIPTTTQTPVEAPETPSFCVPIY). Over residues 211-220 (TTIPTTTQTP) the composition is skewed to low complexity.

It belongs to the protease inhibitor I33 family.

The protein resides in the secreted. Aspartyl protease inhibitor. This chain is Filarial antigen Av33, found in Acanthocheilonema viteae (Filarial nematode worm).